Consider the following 365-residue polypeptide: tRNA-specific 2-thiouridylase MnmA (365 aa).

Residues 14-21 and L40 each bind ATP; that span reads AMSGGVDS. C108 serves as the catalytic Nucleophile. Cysteines 108 and 204 form a disulfide. G132 contributes to the ATP binding site. The interval 154–156 is interaction with tRNA; that stretch reads KDQ. C204 serves as the catalytic Cysteine persulfide intermediate.

Belongs to the MnmA/TRMU family.

It localises to the cytoplasm. The enzyme catalyses S-sulfanyl-L-cysteinyl-[protein] + uridine(34) in tRNA + AH2 + ATP = 2-thiouridine(34) in tRNA + L-cysteinyl-[protein] + A + AMP + diphosphate + H(+). In terms of biological role, catalyzes the 2-thiolation of uridine at the wobble position (U34) of tRNA, leading to the formation of s(2)U34. In Rickettsia felis (strain ATCC VR-1525 / URRWXCal2) (Rickettsia azadi), this protein is tRNA-specific 2-thiouridylase MnmA.